Reading from the N-terminus, the 284-residue chain is Probable endonuclease 4 (284 aa).

Zn(2+) contacts are provided by His69, His113, Glu148, Asp182, His185, His217, Asp230, His232, and Glu262.

It belongs to the AP endonuclease 2 family. Requires Zn(2+) as cofactor.

It carries out the reaction Endonucleolytic cleavage to 5'-phosphooligonucleotide end-products.. Functionally, endonuclease IV plays a role in DNA repair. It cleaves phosphodiester bonds at apurinic or apyrimidinic (AP) sites, generating a 3'-hydroxyl group and a 5'-terminal sugar phosphate. The chain is Probable endonuclease 4 from Bifidobacterium longum subsp. infantis (strain ATCC 15697 / DSM 20088 / JCM 1222 / NCTC 11817 / S12).